The chain runs to 159 residues: Phosphodiesterase delta-like protein (159 aa).

It belongs to the PDE6D/unc-119 family.

The polypeptide is Phosphodiesterase delta-like protein (pdl-1) (Caenorhabditis elegans).